Consider the following 727-residue polypeptide: Plakophilin-1 (727 aa).

The interval 1–235 is required for binding to single stranded DNA; sequence MNHSPLKTAL…SFSHSRASSK (235 aa). The tract at residues 1–287 is required for interaction with EIF4A1; that stretch reads MNHSPLKTAL…ESAKQQVYQL (287 aa). Phosphoserine is present on S4. The interval 48-69 is disordered; it reads TVKRQKSKSSQSSTLSHSNRGS. Phosphorylation in this region is required for cytoplasmic localization and protein stabilization stretches follow at residues 54–69 and 117–192; these read SKSSQSSTLSHSNRGS and RFSS…STCS. A phosphoserine mark is found at S119, S120, S122, and S143. The tract at residues 161 to 270 is required for WNT-mediated nuclear localization; that stretch reads YCDPRGTLRK…KCQAIGAYYI (110 aa). 9 ARM repeats span residues 244 to 275, 276 to 317, 318 to 360, 361 to 412, 413 to 443, 505 to 536, 537 to 583, 584 to 629, and 630 to 693; these read SGLTIPKAVQYLSSQDEKCQAIGAYYIQHTCF, QDES…NLVF, RSTT…NLSS, TDEL…GCLR, NLSSADVGRQTMRNYTGLIDSLMAYVQNCVA, NYDCPLPEEEPNPKGSSWLYHSDAVRTYLNLM, GKSK…IARL, LQSG…SHTG, and NTSN…DMWS.

The protein belongs to the beta-catenin family. In terms of assembly, part of a complex that contains DSG3, PKP1, YAP1 and YWHAG; the complex is required for localization of DSG3 and YAP1 to the cell membrane in keratinocytes. Interacts (via N-terminus) with KRT5/CK5, KRT8/CK8 (via rod domain), KRT15/CK15 and KRT18/CK18 (via rod domain) as part of intermediate filaments. Interacts with VIM (via rod domain). Interacts with DSP. Interacts with DES. Interacts with FXR1; the interaction may facilitate the binding of PKP1 to PKP2, PKP3 and DSP mRNA. Interacts (via N-terminus) with EIF4A1; the interaction promotes EIF4A1 recruitment to the cap-dependent translation complex and EIF4A1 ATPase activity. Interacts with TJP1/ZO-1; the interaction facilitates TJP1/ZO-1 localization to the plasma membrane. Interacts (when phosphorylated) with YWHAG; the interaction results in translocation of PKP1 to the cytoplasm and loss of intercellular adhesion in keratinocytes. In terms of processing, phosphorylated by AKT2; required for interaction with YWHAG and subsequent localization away from desmosomes to the cytoplasm. Phosphorylation of Ser-119 by AKT2 promotes PKP1-driven cap-dependent mRNA translation and decreases intercellular adhesion, phosphorylation is promoted by insulin. Phosphorylation by RIPK4 at the N-terminus is required for its role in differentiation of keratinocytes and DSG1 localization at cell junctions.

Its subcellular location is the nucleus. The protein resides in the cytoplasm. It is found in the perinuclear region. The protein localises to the cell junction. It localises to the desmosome. Its subcellular location is the cell membrane. The protein resides in the stress granule. In terms of biological role, a component of desmosome cell-cell junctions which are required for positive regulation of cellular adhesion. Plays a role in desmosome protein expression regulation and localization to the desmosomal plaque, thereby maintaining cell sheet integrity and anchorage of desmosomes to intermediate filaments. Required for localization of DSG3 and YAP1 to the cell membrane in keratinocytes in response to mechanical strain, via the formation of an interaction complex composed of DSG3, YAP1, PKP1 and YWHAG. Positively regulates differentiation of keratinocytes, potentially via promoting localization of DSG1 at desmosome cell junctions. Required for calcium-independent development and maturation of desmosome plaques specifically at lateral cell-cell contacts in differentiating keratinocytes. Plays a role in the maintenance of DSG3 protein abundance, DSG3 clustering and localization of these clusters to the cell membrane in keratinocytes. May also promote keratinocyte proliferation and morphogenesis during postnatal development. Required for tight junction inside-out transepidermal barrier function of the skin. Promotes Wnt-mediated proliferation and differentiation of ameloblasts, via facilitating TJP1/ZO-1 localization to tight junctions. Binds single-stranded DNA (ssDNA), and may thereby play a role in sensing DNA damage and promoting cell survival. Positively regulates cap-dependent translation and as a result cell proliferation, via recruitment of EIF4A1 to the initiation complex and promotion of EIF4A1 ATPase activity. Regulates the mRNA stability and protein abundance of desmosome components PKP2, PKP3, DSC2 and DSP, potentially via its interaction with FXR1. May facilitate the formation of intermediate filaments. This is Plakophilin-1 (PKP1) from Bos taurus (Bovine).